Reading from the N-terminus, the 494-residue chain is Probable cytosol aminopeptidase (494 aa).

2 residues coordinate Mn(2+): K260 and D265. Residue K272 is part of the active site. The Mn(2+) site is built by D283, D342, and E344. Residue R346 is part of the active site.

It belongs to the peptidase M17 family. The cofactor is Mn(2+).

Its subcellular location is the cytoplasm. It catalyses the reaction Release of an N-terminal amino acid, Xaa-|-Yaa-, in which Xaa is preferably Leu, but may be other amino acids including Pro although not Arg or Lys, and Yaa may be Pro. Amino acid amides and methyl esters are also readily hydrolyzed, but rates on arylamides are exceedingly low.. The enzyme catalyses Release of an N-terminal amino acid, preferentially leucine, but not glutamic or aspartic acids.. Presumably involved in the processing and regular turnover of intracellular proteins. Catalyzes the removal of unsubstituted N-terminal amino acids from various peptides. This Bacillus thuringiensis (strain Al Hakam) protein is Probable cytosol aminopeptidase.